The sequence spans 255 residues: Small ribosomal subunit protein uS2 (255 aa).

Residues 233–255 (DFVAEEAASEESLEELAEIVEGK) are disordered.

It belongs to the universal ribosomal protein uS2 family.

This Lactococcus lactis subsp. cremoris (strain SK11) protein is Small ribosomal subunit protein uS2.